Here is a 126-residue protein sequence, read N- to C-terminus: MWKSILAIAIGAAAGALLRWFLGLRLNSLFPSLPPGTLAANLVGGYIIGVAVALFADMPMLSPLWRLLIITGFCGGLTTFSTFSAEVVDLLRQGQLQPAFAAIAVHVSGSLLMTMAGIASWQWLRR.

Helical transmembrane passes span 4-24 (SILAIAIGAAAGALLRWFLGL), 36-56 (GTLAANLVGGYIIGVAVALFA), 68-88 (LIITGFCGGLTTFSTFSAEVV), and 99-119 (AFAAIAVHVSGSLLMTMAGIA). Residues glycine 75 and threonine 78 each contribute to the Na(+) site.

Belongs to the fluoride channel Fluc/FEX (TC 1.A.43) family.

The protein localises to the cell inner membrane. It catalyses the reaction fluoride(in) = fluoride(out). Its activity is regulated as follows. Na(+) is not transported, but it plays an essential structural role and its presence is essential for fluoride channel function. Functionally, fluoride-specific ion channel. Important for reducing fluoride concentration in the cell, thus reducing its toxicity. This Chromobacterium violaceum (strain ATCC 12472 / DSM 30191 / JCM 1249 / CCUG 213 / NBRC 12614 / NCIMB 9131 / NCTC 9757 / MK) protein is Fluoride-specific ion channel FluC.